The sequence spans 170 residues: Probable T4-type lysozyme 2 (170 aa).

The active-site Proton donor is Glu13. Residue Asp22 is the Nucleophile of the active site.

It belongs to the glycosyl hydrolase 24 family.

The catalysed reaction is Hydrolysis of (1-&gt;4)-beta-linkages between N-acetylmuramic acid and N-acetyl-D-glucosamine residues in a peptidoglycan and between N-acetyl-D-glucosamine residues in chitodextrins.. In Dictyostelium discoideum (Social amoeba), this protein is Probable T4-type lysozyme 2.